The primary structure comprises 449 residues: Type 3 secretion system ATPase (449 aa).

Residue 178–183 coordinates ATP; the sequence is GCGKTT.

The protein belongs to the ATPase alpha/beta chains family. T3SS ATPase subfamily. In terms of assembly, the core secretion machinery of the T3SS is composed of approximately 20 different proteins, including cytoplasmic components, a base, an export apparatus and a needle. This subunit is part of the cytosolic complex. Forms homododecamers.

Its subcellular location is the cytoplasm. The enzyme catalyses ATP + H2O + cellular proteinSide 1 = ADP + phosphate + cellular proteinSide 2.. Functionally, ATPase component of the type III secretion system (T3SS), also called injectisome, which is used to inject bacterial effector proteins into eukaryotic host cells. Acts as a molecular motor to provide the energy that is required for the export of proteins. Required for type III secretion apparatus (T3SA) formation, proper protein secretion, host cell invasion and virulence. May play a critical role in T3SS substrate recognition, disassembly of the effector/chaperone complex and unfolding of the effector in an ATP-dependent manner prior to secretion. The protein is Type 3 secretion system ATPase of Pseudomonas syringae pv. syringae.